The following is a 170-amino-acid chain: RNA pyrophosphohydrolase (170 aa).

Residues 6–149 (GFRPNVGIIL…KRDVYRRALK (144 aa)) form the Nudix hydrolase domain. The Nudix box signature appears at 39 to 60 (GGIKHNESPENALYRELEEEVG).

It belongs to the Nudix hydrolase family. RppH subfamily. Requires a divalent metal cation as cofactor.

Accelerates the degradation of transcripts by removing pyrophosphate from the 5'-end of triphosphorylated RNA, leading to a more labile monophosphorylated state that can stimulate subsequent ribonuclease cleavage. The sequence is that of RNA pyrophosphohydrolase from Saccharophagus degradans (strain 2-40 / ATCC 43961 / DSM 17024).